A 392-amino-acid chain; its full sequence is Probable inactive serine/threonine-protein kinase DDB_G0280855 (392 aa).

The Protein kinase domain occupies 46–349 (ITKKTIYACD…IERIIQHPYF (304 aa)). ATP-binding positions include 52-60 (YACDINGTM) and Lys75.

This sequence belongs to the protein kinase superfamily. CMGC Ser/Thr protein kinase family. MAP kinase subfamily.

The protein is Probable inactive serine/threonine-protein kinase DDB_G0280855 of Dictyostelium discoideum (Social amoeba).